Here is an 805-residue protein sequence, read N- to C-terminus: Leucine--tRNA ligase (805 aa).

The short motif at 40–51 (PYPSGAGLHVGH) is the 'HIGH' region element. Positions 576 to 580 (KMSKS) match the 'KMSKS' region motif. Lys-579 contributes to the ATP binding site.

It belongs to the class-I aminoacyl-tRNA synthetase family.

It localises to the cytoplasm. The enzyme catalyses tRNA(Leu) + L-leucine + ATP = L-leucyl-tRNA(Leu) + AMP + diphosphate. The protein is Leucine--tRNA ligase of Geobacillus thermodenitrificans (strain NG80-2).